The sequence spans 251 residues: ATP synthase subunit a (251 aa).

The next 7 helical transmembrane spans lie at 28–48 (FTQS…IIAL), 63–80 (LVEI…EQIG), 86–106 (FFPF…LGLF), 115–135 (HVAV…AVAL), 154–176 (ALAP…SLSI), 195–215 (FMFL…LLPM), and 219–239 (VTLV…FAIL).

This sequence belongs to the ATPase A chain family. F-type ATPases have 2 components, CF(1) - the catalytic core - and CF(0) - the membrane proton channel. CF(1) has five subunits: alpha(3), beta(3), gamma(1), delta(1), epsilon(1). CF(0) has three main subunits: a(1), b(2) and c(9-12). The alpha and beta chains form an alternating ring which encloses part of the gamma chain. CF(1) is attached to CF(0) by a central stalk formed by the gamma and epsilon chains, while a peripheral stalk is formed by the delta and b chains.

The protein localises to the cell inner membrane. Its function is as follows. Key component of the proton channel; it plays a direct role in the translocation of protons across the membrane. This chain is ATP synthase subunit a, found in Granulibacter bethesdensis (strain ATCC BAA-1260 / CGDNIH1).